A 156-amino-acid polypeptide reads, in one-letter code: ATP synthase subunit b (156 aa).

Residues 5-25 (LTLIGQAIAFAFFVAFCMKFV) form a helical membrane-spanning segment.

It belongs to the ATPase B chain family. F-type ATPases have 2 components, F(1) - the catalytic core - and F(0) - the membrane proton channel. F(1) has five subunits: alpha(3), beta(3), gamma(1), delta(1), epsilon(1). F(0) has three main subunits: a(1), b(2) and c(10-14). The alpha and beta chains form an alternating ring which encloses part of the gamma chain. F(1) is attached to F(0) by a central stalk formed by the gamma and epsilon chains, while a peripheral stalk is formed by the delta and b chains.

It is found in the cell inner membrane. Functionally, f(1)F(0) ATP synthase produces ATP from ADP in the presence of a proton or sodium gradient. F-type ATPases consist of two structural domains, F(1) containing the extramembraneous catalytic core and F(0) containing the membrane proton channel, linked together by a central stalk and a peripheral stalk. During catalysis, ATP synthesis in the catalytic domain of F(1) is coupled via a rotary mechanism of the central stalk subunits to proton translocation. Component of the F(0) channel, it forms part of the peripheral stalk, linking F(1) to F(0). In Acinetobacter baumannii (strain AYE), this protein is ATP synthase subunit b.